The following is a 967-amino-acid chain: Dolichyl-phosphooligosaccharide-protein glycotransferase 1 (967 aa).

Topologically, residues 1–21 (MVKTQIKEKKKDEKVTIPLPG) are cytoplasmic. The helical transmembrane segment at 22 to 42 (KIKTVLAFLVVLAFAAYGFYI) threads the bilayer. Topologically, residues 43–112 (RHLTAGKYFS…ISIFGYNELE (70 aa)) are extracellular. The DXD motif 1 motif lies at 53–55 (DPD). Aspartate 55 provides a ligand contact to Mn(2+). A helical transmembrane segment spans residues 113 to 133 (AFLLWPPFVGFLSVIGVYLLG). Over 134–135 (RK) the chain is Cytoplasmic. A helical membrane pass occupies residues 136-156 (VLNEWAGMWGAIILSVLTANF). At 157 to 165 (SRTFSGNAR) the chain is on the extracellular side. 2 residues coordinate Mn(2+): arginine 165 and aspartate 167. The DXD motif 2 signature appears at 165 to 167 (RGD). The helical transmembrane segment at 166-186 (GDGPFMMLFTFSAVLMLYYLT) threads the bilayer. Residues 187-193 (EENKNKK) are Cytoplasmic-facing. The chain crosses the membrane as a helical span at residues 194 to 214 (IIWGTLFVLLAGISTAAWNGS). Position 215 (proline 215) is a topological domain, extracellular. A helical transmembrane segment spans residues 216–236 (FGLMVLLGFASFQTIILFIFG). Residues 237 to 247 (KINELREFIKE) lie on the Cytoplasmic side of the membrane. Residues 248-268 (YYPAYLGILAISYLLTIPGIG) traverse the membrane as a helical segment. Lysine 269 is a topological domain (extracellular). Residues 270–290 (IGGFVRFAFEVFLGLVFLAIV) traverse the membrane as a helical segment. The Cytoplasmic segment spans residues 291–306 (MLYGGKYLNYSDKKHR). Residues 307-327 (FAVVAVIVIAGFAGAYIYVGP) traverse the membrane as a helical segment. The Extracellular portion of the chain corresponds to 328 to 360 (KLFTLMGGAYQSTQVYETVQELAKTDWGDVKVY). Residues 345 to 348 (TVQE) carry the TIXE motif motif. Residues 361 to 381 (YGVEKPNGIVFFLGLVGAMIV) traverse the membrane as a helical segment. Residues 382–396 (TARYLYKLFKDGRRP) lie on the Cytoplasmic side of the membrane. The chain crosses the membrane as a helical span at residues 397–417 (HEELFAITFYVMSIYLLWTAA). Position 418 (arginine 418) is a topological domain, extracellular. Arginine 418 provides a ligand contact to a glycophospholipid. The helical transmembrane segment at 419 to 439 (FLFLASYAIALMSGVFAGYVL) threads the bilayer. Over 440 to 453 (ETVEKMKESIPIKA) the chain is Cytoplasmic. A helical transmembrane segment spans residues 454 to 474 (ALGGVIAIMLLLIPLTHGPLL). The Extracellular portion of the chain corresponds to 475–967 (AQSAKSMRTT…LEVSASAPHH (493 aa)). Positions 511-513 (WWD) are interacts with target acceptor peptide in protein substrate. The WWDYG motif motif lies at 511 to 515 (WWDYG). An a glycophospholipid-binding site is contributed by tyrosine 516. A DK motif motif is present at residues 571–578 (DWAKFNAI).

Belongs to the STT3 family. Mn(2+) is required as a cofactor. It depends on Mg(2+) as a cofactor.

Its subcellular location is the cell membrane. It carries out the reaction an archaeal dolichyl phosphooligosaccharide + [protein]-L-asparagine = an archaeal dolichyl phosphate + a glycoprotein with the oligosaccharide chain attached by N-beta-D-glycosyl linkage to a protein L-asparagine.. It participates in protein modification; protein glycosylation. Oligosaccharyl transferase (OST) that catalyzes the initial transfer of a defined glycan (ManNAcXyl(2)GlcAMan(2)GalNAc in P.furiosus) from the lipid carrier dolichol-monophosphate to an asparagine residue within an Asn-X-Ser/Thr consensus motif in nascent polypeptide chains, the first step in protein N-glycosylation. This chain is Dolichyl-phosphooligosaccharide-protein glycotransferase 1 (aglB1), found in Pyrococcus furiosus (strain ATCC 43587 / DSM 3638 / JCM 8422 / Vc1).